The primary structure comprises 234 residues: Ubiquitin domain-containing protein 2 (234 aa).

The segment at 1–46 is disordered; it reads MGGCVGAQHDSSGSLNENSDGTGVALGRNQPLKKEKPKWKSDYPMT. Residues 9–21 are compositionally biased toward polar residues; sequence HDSSGSLNENSDG. Residues 32-41 are compositionally biased toward basic and acidic residues; it reads LKKEKPKWKS. The Ubiquitin-like domain maps to 152-227; that stretch reads SQLRLRLSTG…VQVIVSQPVQ (76 aa).

The protein resides in the cytoplasm. In Mus musculus (Mouse), this protein is Ubiquitin domain-containing protein 2 (Ubtd2).